Consider the following 478-residue polypeptide: Membrane-bound lytic murein transglycosylase F (478 aa).

A signal peptide spans 1–22 (MTRFLFAIILGFLLTACQQVTV). Residues 23-257 (EETEYVPHKL…HLNEKYFGHV (235 aa)) are non-LT domain. The tract at residues 258–478 (KRFDYIDTRA…PGTLSPDKPK (221 aa)) is LT domain. The active site involves Glu-302. The interval 446–478 (SKQQNSDEEEPSDLASEDGPAPVPGTLSPDKPK) is disordered. A compositionally biased stretch (acidic residues) spans 451-461 (SDEEEPSDLAS).

It in the N-terminal section; belongs to the bacterial solute-binding protein 3 family. The protein in the C-terminal section; belongs to the transglycosylase Slt family.

The protein resides in the cell outer membrane. The enzyme catalyses Exolytic cleavage of the (1-&gt;4)-beta-glycosidic linkage between N-acetylmuramic acid (MurNAc) and N-acetylglucosamine (GlcNAc) residues in peptidoglycan, from either the reducing or the non-reducing ends of the peptidoglycan chains, with concomitant formation of a 1,6-anhydrobond in the MurNAc residue.. Functionally, murein-degrading enzyme that degrades murein glycan strands and insoluble, high-molecular weight murein sacculi, with the concomitant formation of a 1,6-anhydromuramoyl product. Lytic transglycosylases (LTs) play an integral role in the metabolism of the peptidoglycan (PG) sacculus. Their lytic action creates space within the PG sacculus to allow for its expansion as well as for the insertion of various structures such as secretion systems and flagella. The sequence is that of Membrane-bound lytic murein transglycosylase F from Shewanella sp. (strain ANA-3).